Reading from the N-terminus, the 118-residue chain is Large ribosomal subunit protein bL20 (118 aa).

Belongs to the bacterial ribosomal protein bL20 family.

Functionally, binds directly to 23S ribosomal RNA and is necessary for the in vitro assembly process of the 50S ribosomal subunit. It is not involved in the protein synthesizing functions of that subunit. The sequence is that of Large ribosomal subunit protein bL20 from Staphylococcus carnosus (strain TM300).